A 662-amino-acid chain; its full sequence is Interferon-induced GTP-binding protein Mx1 (662 aa).

N-acetylmethionine; in Interferon-induced GTP-binding protein Mx1; alternate is present on M1. A Dynamin-type G domain is found at 67-340; it reads DLALPAIAVI…LITHICKSLP (274 aa). The G1 motif stretch occupies residues 77 to 84; the sequence is GDQSSGKS. 77 to 84 serves as a coordination point for GTP; sequence GDQSSGKS. The interval 102-104 is G2 motif; that stretch reads VTR. The G3 motif stretch occupies residues 178–181; the sequence is DLPG. GTP contacts are provided by residues 178–182 and 247–250; these read DLPGI and TKPD. Residues 247-250 form a G4 motif region; that stretch reads TKPD. Positions 279–282 are G5 motif; the sequence is KCRG. Residues 341–366 form a bundle signaling element (BSE) region; the sequence is LLENQIKETHQRITEELQKYGVDIPE. Positions 366 to 533 are middle domain; it reads EDENEKMFFL…HFQMEQIVYC (168 aa). The segment at 367–632 is stalk; the sequence is DENEKMFFLI…KDTYSWLLKE (266 aa). Residues 554-557 form a critical for lipid-binding region; sequence KKKK. The GED domain maps to 574-662; that stretch reads MEEIFQHLMA…ARRRLAQFPG (89 aa).

This sequence belongs to the TRAFAC class dynamin-like GTPase superfamily. Dynamin/Fzo/YdjA family. Homotetramer. Oligomerizes into multimeric filamentous or ring-like structures by virtue of its stalk domain. Oligomerization is critical for GTPase activity, protein stability, and recognition of viral target structures. Interacts with TRPC1, TRPC3, TRPC4, TRPC5, TRPC6 and TRPC7. Interacts with HSPA5. Interacts with DDX39A and DDX39B. Interacts with TUBB/TUBB5. The GTP-bound form interacts (via C-terminus) with THOV P5 protein. The GTP-bound form interacts with LACV protein N. Interacts with CCHFV protein N. In terms of processing, ISGylated.

It localises to the cytoplasm. The protein localises to the endoplasmic reticulum membrane. The protein resides in the perinuclear region. Its subcellular location is the nucleus. In terms of biological role, interferon-induced dynamin-like GTPase with antiviral activity against a wide range of RNA viruses and some DNA viruses. Its target viruses include negative-stranded RNA viruses and HBV through binding and inactivation of their ribonucleocapsid. May also antagonize reoviridae and asfarviridae replication. Inhibits thogoto virus (THOV) replication by preventing the nuclear import of viral nucleocapsids. Inhibits La Crosse virus (LACV) replication by sequestering viral nucleoprotein in perinuclear complexes, preventing genome amplification, budding, and egress. Inhibits influenza A virus (IAV) replication by decreasing or delaying NP synthesis and by blocking endocytic traffic of incoming virus particles. Enhances ER stress-mediated cell death after influenza virus infection. May regulate the calcium channel activity of TRPCs. The protein is Interferon-induced GTP-binding protein Mx1 (MX1) of Homo sapiens (Human).